The following is a 725-amino-acid chain: Putative oligopeptide transporter YGL114W (725 aa).

9 helical membrane-spanning segments follow: residues 28–48, 134–154, 254–274, 353–373, 449–469, 472–492, 564–584, 644–664, and 697–717; these read ATIAGIAIGSLVLTSNFQFGL, FRELLIWSTALAFFGIFFAVP, IIILLKTFVVSSLYTMVSYFV, WILWSSLSIMVADSVVAFIVV, ISGCLVSSIICIVSIIYLFGI, IPLYAIITALILALFLSILGI, FCAQLIGACWSIILSSFMYLC, YGYGWILYIPSGVAVGVGIFN, and IVFSSGLVLGEGIFSVINMLF.

It belongs to the oligopeptide OPT transporter family.

Its subcellular location is the membrane. This is Putative oligopeptide transporter YGL114W from Saccharomyces cerevisiae (strain ATCC 204508 / S288c) (Baker's yeast).